The sequence spans 181 residues: ATP-dependent protease subunit HslV (181 aa).

Thr-7 is a catalytic residue. Na(+) contacts are provided by Ala-166, Cys-169, and Thr-172.

This sequence belongs to the peptidase T1B family. HslV subfamily. As to quaternary structure, a double ring-shaped homohexamer of HslV is capped on each side by a ring-shaped HslU homohexamer. The assembly of the HslU/HslV complex is dependent on binding of ATP.

It localises to the cytoplasm. It catalyses the reaction ATP-dependent cleavage of peptide bonds with broad specificity.. Allosterically activated by HslU binding. Functionally, protease subunit of a proteasome-like degradation complex believed to be a general protein degrading machinery. In Anaeromyxobacter dehalogenans (strain 2CP-C), this protein is ATP-dependent protease subunit HslV.